Consider the following 319-residue polypeptide: Phenoxybenzoate dioxygenase subunit beta (319 aa).

The 103-residue stretch at 7 to 109 (MAPVSLRIHA…DGPSNHFALD (103 aa)) folds into the FAD-binding FR-type domain. Residue 113–223 (PHAVFIAGGI…PARVHLEYFA (111 aa)) coordinates NAD(+). A 2Fe-2S ferredoxin-type domain is found at 234–319 (FVVHLARSGR…SKTAELTLDL (86 aa)). [2Fe-2S] cluster contacts are provided by Cys-268, Cys-273, Cys-276, and Cys-306.

The protein belongs to the PDR/VanB family. In terms of assembly, this dioxygenase system consists of two proteins: the alpha subunit (PobA) and a subunit (PobB) that acts as a ferredoxin and a ferredoxin reductase. The cofactor is FMN.

It participates in aromatic compound metabolism; carboxydiphenyl ether degradation. Its function is as follows. Degrades exclusively diarylether compounds having carboxyl groups in the 3- or 4-position. Yields a hemiacetal that spontaneously hydrolyzes to phenol and protocatechuate. This chain is Phenoxybenzoate dioxygenase subunit beta (pobB), found in Ectopseudomonas oleovorans (Pseudomonas oleovorans).